Here is a 149-residue protein sequence, read N- to C-terminus: Protein DOWN-REGULATED IN DIF1 11 (149 aa).

The signal sequence occupies residues 1–22 (MEKAILITFLIATTSMVYQTIG).

Mostly expressed in embryo sac cells. Restricted to synergid cells, especially in the filiform apparatus of mature female gametophyte, via MYB98-mediated transcription regulation. Also detected at low levels in egg and central cells.

In Arabidopsis thaliana (Mouse-ear cress), this protein is Protein DOWN-REGULATED IN DIF1 11.